The chain runs to 619 residues: Secretogranin-2 (619 aa).

The first 30 residues, 1–30 (MTESKAYRFGAVLLLIHLIFLVPGTEAASF), serve as a signal peptide directing secretion. Tyr153 carries the sulfotyrosine modification. A phosphoserine mark is found at Ser176 and Ser270. Positions 247-307 (VGGEDWSPME…RKESKDQLSE (61 aa)) are disordered. Composition is skewed to basic and acidic residues over residues 255–286 (MEEK…EMKR) and 295–307 (EGNR…QLSE). A phosphoserine mark is found at Ser434, Ser534, Ser557, and Ser558.

This sequence belongs to the chromogranin/secretogranin protein family. Interacts with Secretogranin III/SCG3. As to expression, brain. Expression in the pituitary is restricted to the anterior lobe. Expression in the hypothalamus is observed in the neuronal cells and neurons of arcuate nucleus, supraoptic nucleus and median eminence (at protein level).

The protein localises to the secreted. Functionally, neuroendocrine protein of the granin family that regulates the biogenesis of secretory granules. The protein is Secretogranin-2 (Scg2) of Rattus norvegicus (Rat).